The sequence spans 409 residues: uncharacterized protein (409 aa).

A run of 4 helical transmembrane segments spans residues 20-40 (ILTM…VSML), 283-303 (FALL…IGVM), 344-364 (IGGI…TVIF), and 372-392 (IPAV…FGLL).

The protein belongs to the ABC-4 integral membrane protein family.

The protein localises to the cell membrane. This is an uncharacterized protein from Bacillus subtilis (strain 168).